A 323-amino-acid chain; its full sequence is MAYVPAPGYQPTYNPTLPYYQPIPGGLNVGMSVYIQGVASEHMKRFFVNFVVGQDPGSDVAFHFNPRFDGWDKVVFNTLQGGKWGSEERKRSMPFKKGAAFELVFIVLAEHYKVVVNGNPFYEYGHRLPLQMVTHLQVDGDLQLQSINFIGGQPLRPQGPPMMPPYPGPGHCHQQLNSLPTMEGPPTFNPPVPYFGRLQGGLTARRTIIIKGYVPPTGKSFAINFKVGSSGDIALHINPRMGNGTVVRNSLLNGSWGSEEKKITHNPFGPGQFFDLSIRCGLDRFKVYANGQHLFDFAHRLSAFQRVDTLEIQGDVTLSYVQI.

2 Galectin domains span residues 19 to 150 and 194 to 323; these read YYQP…INFI and YFGR…YVQI. 256 to 262 is a binding site for a beta-D-galactoside; that stretch reads WGSEEKK. The residue at position 258 (Ser-258) is a Phosphoserine.

As to quaternary structure, monomer.

In terms of biological role, galectin that binds lactose and a related range of sugars. May be involved in the assembly of adherens junctions. This Homo sapiens (Human) protein is Galectin-4 (LGALS4).